Reading from the N-terminus, the 186-residue chain is Peptidyl-tRNA hydrolase (186 aa).

Tyr-14 contacts tRNA. The Proton acceptor role is filled by His-19. Tyr-60 and Asn-62 together coordinate tRNA.

It belongs to the PTH family. As to quaternary structure, monomer.

It localises to the cytoplasm. The catalysed reaction is an N-acyl-L-alpha-aminoacyl-tRNA + H2O = an N-acyl-L-amino acid + a tRNA + H(+). In terms of biological role, hydrolyzes ribosome-free peptidyl-tRNAs (with 1 or more amino acids incorporated), which drop off the ribosome during protein synthesis, or as a result of ribosome stalling. Functionally, catalyzes the release of premature peptidyl moieties from peptidyl-tRNA molecules trapped in stalled 50S ribosomal subunits, and thus maintains levels of free tRNAs and 50S ribosomes. This is Peptidyl-tRNA hydrolase from Mycoplasmopsis pulmonis (strain UAB CTIP) (Mycoplasma pulmonis).